The primary structure comprises 223 residues: Phosphoribosylformylglycinamidine synthase subunit PurQ (223 aa).

Residues 2-223 (KIAVVVFPGS…KSLLKAGVQA (222 aa)) form the Glutamine amidotransferase type-1 domain. The active-site Nucleophile is Cys86. Catalysis depends on residues His195 and Glu197.

In terms of assembly, part of the FGAM synthase complex composed of 1 PurL, 1 PurQ and 2 PurS subunits.

The protein localises to the cytoplasm. It catalyses the reaction N(2)-formyl-N(1)-(5-phospho-beta-D-ribosyl)glycinamide + L-glutamine + ATP + H2O = 2-formamido-N(1)-(5-O-phospho-beta-D-ribosyl)acetamidine + L-glutamate + ADP + phosphate + H(+). The catalysed reaction is L-glutamine + H2O = L-glutamate + NH4(+). Its pathway is purine metabolism; IMP biosynthesis via de novo pathway; 5-amino-1-(5-phospho-D-ribosyl)imidazole from N(2)-formyl-N(1)-(5-phospho-D-ribosyl)glycinamide: step 1/2. Its function is as follows. Part of the phosphoribosylformylglycinamidine synthase complex involved in the purines biosynthetic pathway. Catalyzes the ATP-dependent conversion of formylglycinamide ribonucleotide (FGAR) and glutamine to yield formylglycinamidine ribonucleotide (FGAM) and glutamate. The FGAM synthase complex is composed of three subunits. PurQ produces an ammonia molecule by converting glutamine to glutamate. PurL transfers the ammonia molecule to FGAR to form FGAM in an ATP-dependent manner. PurS interacts with PurQ and PurL and is thought to assist in the transfer of the ammonia molecule from PurQ to PurL. The chain is Phosphoribosylformylglycinamidine synthase subunit PurQ from Lactobacillus acidophilus (strain ATCC 700396 / NCK56 / N2 / NCFM).